Here is a 191-residue protein sequence, read N- to C-terminus: Adenylate kinase (191 aa).

10–15 (GAGKGT) provides a ligand contact to ATP. Residues 30-59 (STGDMLRAARTSGTEMGNLVAGVMDRGELV) are NMP. Residues T31, R36, 57-59 (ELV), 83-86 (GFPR), and Q90 each bind AMP. Residues 124–140 (NRAKEAAAAGQPVRADD) are LID. R125 contributes to the ATP binding site. Positions 137 and 148 each coordinate AMP. G176 is a binding site for ATP.

The protein belongs to the adenylate kinase family. As to quaternary structure, monomer.

The protein resides in the cytoplasm. The enzyme catalyses AMP + ATP = 2 ADP. Its pathway is purine metabolism; AMP biosynthesis via salvage pathway; AMP from ADP: step 1/1. Functionally, catalyzes the reversible transfer of the terminal phosphate group between ATP and AMP. Plays an important role in cellular energy homeostasis and in adenine nucleotide metabolism. This Jannaschia sp. (strain CCS1) protein is Adenylate kinase.